The sequence spans 360 residues: Ferredoxin--NADP reductase, leaf isozyme, chloroplastic (360 aa).

A chloroplast-targeting transit peptide spans 1–52 (MAAAVTAAVSLPYSNSTSLPIRTSIVAPERLVFKKVSLNNVSISGRVGTIRA). Residues 81-203 (KEPYVGRCLL…TGPVGKEMLM (123 aa)) enclose the FAD-binding FR-type domain. FAD contacts are provided by residues 139–142 (RLYS), 160–162 (CVK), Tyr166, 177–179 (VCS), and Thr218. NADP(+) contacts are provided by Ser142 and Lys162. Residues Thr218, 250-251 (VP), 280-281 (SR), Lys290, 319-320 (GL), and Glu358 contribute to the NADP(+) site.

Belongs to the ferredoxin--NADP reductase type 1 family. Monomer. Interacts with TIC62 (via C-terminus). The cofactor is FAD.

It localises to the plastid. The protein resides in the chloroplast stroma. The protein localises to the chloroplast thylakoid membrane. The enzyme catalyses 2 reduced [2Fe-2S]-[ferredoxin] + NADP(+) + H(+) = 2 oxidized [2Fe-2S]-[ferredoxin] + NADPH. The protein operates within energy metabolism; photosynthesis. May play a key role in regulating the relative amounts of cyclic and non-cyclic electron flow to meet the demands of the plant for ATP and reducing power. This chain is Ferredoxin--NADP reductase, leaf isozyme, chloroplastic (PETH), found in Pisum sativum (Garden pea).